A 349-amino-acid polypeptide reads, in one-letter code: Beta-glucanase (349 aa).

The N-terminal stretch at 1–27 (MNIKKTAVKSALAVAAAAAALTTNVSA) is a signal peptide. Residues 28–197 (KDFSGAELYT…WVKVYKYTPG (170 aa)) form the GH16 domain. Glu79 serves as the catalytic Nucleophile. Residue Glu83 is the Proton donor of the active site. The segment at 258–311 (SFNGQVPRDDEPAPQSSSSAPASSSSVPASSSSVPASSSSAFVPPSSSSATNAI) is disordered. The segment covering 270 to 307 (APQSSSSAPASSSSVPASSSSVPASSSSAFVPPSSSSA) has biased composition (low complexity). 5 repeat units span residues 271-277 (PQSSSSA), 278-284 (PASSSSV), 285-291 (PASSSSV), 292-298 (PASSSSA), and 301-307 (PPSSSSA). The 5 X 7 AA tandem repeats of P-X-S-S-S-S-X stretch occupies residues 271-307 (PQSSSSAPASSSSVPASSSSVPASSSSAFVPPSSSSA).

The protein belongs to the glycosyl hydrolase 16 family.

The catalysed reaction is Hydrolysis of (1-&gt;4)-beta-D-glucosidic linkages in beta-D-glucans containing (1-&gt;3)- and (1-&gt;4)-bonds.. This chain is Beta-glucanase, found in Fibrobacter succinogenes (strain ATCC 19169 / S85).